The sequence spans 278 residues: Adenylate kinase (278 aa).

50-55 (GAGKGT) contacts ATP. The interval 70–99 (ATGDMLRAQVAKGTALGKQAKKIMNEGGLV) is NMP. AMP is bound by residues Thr-71, Arg-76, 97 to 99 (GLV), 126 to 129 (GFPR), and Gln-133. Residues 167–204 (GRLVHPASGRSYHRIFNPPKDDMKDDITGEPLVQRSDD) are LID. Residues Arg-168 and 177 to 178 (SY) contribute to the ATP site. AMP is bound by residues Arg-201 and Arg-212. Gln-240 contributes to the ATP binding site.

The protein belongs to the adenylate kinase family. AK2 subfamily. As to quaternary structure, monomer.

The protein resides in the cytoplasm. Its subcellular location is the cytosol. It is found in the mitochondrion intermembrane space. It catalyses the reaction AMP + ATP = 2 ADP. Catalyzes the reversible transfer of the terminal phosphate group between ATP and AMP. Plays an important role in cellular energy homeostasis and in adenine nucleotide metabolism. Adenylate kinase activity is critical for regulation of the phosphate utilization and the AMP de novo biosynthesis pathways. This chain is Adenylate kinase (adk-1), found in Neurospora crassa (strain ATCC 24698 / 74-OR23-1A / CBS 708.71 / DSM 1257 / FGSC 987).